A 581-amino-acid polypeptide reads, in one-letter code: Leucine-rich repeat-containing protein 47 (581 aa).

7 LRR repeats span residues 78–97 (QLHSLVLRRNALGPGLSPEL), 102–123 (ALRVLDLSGNALETLPPGEGLG), 132–154 (QLQSLNLSGNRLRELPADLARCA), 156–177 (RLQSLNLTGNRLDAFPPELFRP), 182–204 (LLSELAAADNCLRELSPDIAHLA), 205–227 (SLKTLDLSNNQLTEIPAELADCP), and 228–248 (KLKEINFRGNRLRDKRLEKMV). The disordered stretch occupies residues 262–301 (AGGRGGRSKGRQEASEKEDRKKRRERKQHRESGEGEEEVA). Residues 271–280 (GRQEASEKED) are compositionally biased toward basic and acidic residues. Residues serine 314, serine 430, and serine 519 each carry the phosphoserine modification. Positions 401–436 (LGRKEAKAKELVRQLQLEAEEQRKQKKRQSVSGLHR) form a coiled coil.

The polypeptide is Leucine-rich repeat-containing protein 47 (Lrrc47) (Mus musculus (Mouse)).